Here is a 254-residue protein sequence, read N- to C-terminus: Acetylglutamate kinase (254 aa).

Substrate-binding positions include 40 to 41 (GG), arginine 62, and asparagine 154. Residues 177–182 (DVSGIL) and 205–207 (IIT) contribute to the ATP site.

Belongs to the acetylglutamate kinase family. ArgB subfamily. In terms of assembly, homodimer.

The protein localises to the cytoplasm. It catalyses the reaction N-acetyl-L-glutamate + ATP = N-acetyl-L-glutamyl 5-phosphate + ADP. It participates in amino-acid biosynthesis; L-arginine biosynthesis; N(2)-acetyl-L-ornithine from L-glutamate: step 2/4. Functionally, catalyzes the ATP-dependent phosphorylation of N-acetyl-L-glutamate. This chain is Acetylglutamate kinase, found in Yersinia enterocolitica serotype O:8 / biotype 1B (strain NCTC 13174 / 8081).